Reading from the N-terminus, the 372-residue chain is NAD(P)H-quinone oxidoreductase subunit 1 (372 aa).

A run of 9 helical transmembrane segments spans residues 27–47 (AIWM…GVLV), 65–85 (PEYI…KLVF), 97–117 (WLFT…YLIV), 128–148 (VGTG…GLLM), 166–186 (AAQS…IVMM), 204–224 (ILGW…IAAL), 266–286 (ILSA…PIPI), 308–328 (ALGI…AILL), and 347–367 (FLLP…LAFP).

Belongs to the complex I subunit 1 family. NDH-1 is composed of at least 11 different subunits.

It is found in the cellular thylakoid membrane. It catalyses the reaction a plastoquinone + NADH + (n+1) H(+)(in) = a plastoquinol + NAD(+) + n H(+)(out). The enzyme catalyses a plastoquinone + NADPH + (n+1) H(+)(in) = a plastoquinol + NADP(+) + n H(+)(out). In terms of biological role, NDH-1 shuttles electrons from an unknown electron donor, via FMN and iron-sulfur (Fe-S) centers, to quinones in the respiratory and/or the photosynthetic chain. The immediate electron acceptor for the enzyme in this species is believed to be plastoquinone. Couples the redox reaction to proton translocation, and thus conserves the redox energy in a proton gradient. This Nostoc sp. (strain PCC 7120 / SAG 25.82 / UTEX 2576) protein is NAD(P)H-quinone oxidoreductase subunit 1.